Reading from the N-terminus, the 183-residue chain is Bifunctional protein PyrR (183 aa).

The short motif at 102–114 is the PRPP-binding element; sequence VVLVDDVLFSGRT.

It belongs to the purine/pyrimidine phosphoribosyltransferase family. PyrR subfamily.

It carries out the reaction UMP + diphosphate = 5-phospho-alpha-D-ribose 1-diphosphate + uracil. Its function is as follows. Regulates the transcription of the pyrimidine nucleotide (pyr) operon in response to exogenous pyrimidines. Functionally, also displays a weak uracil phosphoribosyltransferase activity which is not physiologically significant. In Leifsonia xyli subsp. xyli (strain CTCB07), this protein is Bifunctional protein PyrR.